Reading from the N-terminus, the 341-residue chain is Serine/threonine-protein kinase PDIK1L (341 aa).

One can recognise a Protein kinase domain in the interval 8 to 334 (YDLIREVGRG…LELRLVQIAF (327 aa)). ATP is bound by residues 14–22 (VGRGSYGVV) and K37. D164 serves as the catalytic Proton acceptor.

It belongs to the protein kinase superfamily. Ser/Thr protein kinase family. As to expression, expressed in liver, kidney, pancreas, spleen, thymus and prostate.

Its subcellular location is the nucleus. It catalyses the reaction L-seryl-[protein] + ATP = O-phospho-L-seryl-[protein] + ADP + H(+). The enzyme catalyses L-threonyl-[protein] + ATP = O-phospho-L-threonyl-[protein] + ADP + H(+). In Homo sapiens (Human), this protein is Serine/threonine-protein kinase PDIK1L (PDIK1L).